A 1172-amino-acid chain; its full sequence is Serine/threonine-protein kinase Nek10 (1172 aa).

An ARM repeat occupies 209-251 (GAHKTLVNLLGARDTNVLLGSLLALASLAESQECREKISELNI). Residues 481-514 (YEELVSKLNLLVEDELKQIAENIESINQNKAPLK) adopt a coiled-coil conformation. In terms of domain architecture, Protein kinase spans 519 to 712 (YAILDHLGSG…SEPYGEKADV (194 aa)). Residues 525 to 533 (LGSGAFGCV) and Lys-548 each bind ATP. Catalysis depends on Asp-655, which acts as the Proton acceptor. Disordered stretches follow at residues 855–875 (SELS…YGKD) and 898–954 (TYSE…GSRP). Residues 919-945 (PLKESTFNILKRSFSASGGERQSQTRD) show a composition bias toward polar residues.

Belongs to the protein kinase superfamily. NEK Ser/Thr protein kinase family. NIMA subfamily. In terms of assembly, interacts with RAF1 and MAP2K1; the interaction is direct with RAF1 and required for ERK1/2-signaling pathway activation in response to UV irradiation. Mg(2+) is required as a cofactor. Expressed in the lung.

It carries out the reaction L-seryl-[protein] + ATP = O-phospho-L-seryl-[protein] + ADP + H(+). The enzyme catalyses L-threonyl-[protein] + ATP = O-phospho-L-threonyl-[protein] + ADP + H(+). Functionally, plays a role in the cellular response to UV irradiation. Mediates G2/M cell cycle arrest, MEK autoactivation and ERK1/2-signaling pathway activation in response to UV irradiation. In ciliated cells of airways, it is involved in the regulation of mucociliary transport. In Homo sapiens (Human), this protein is Serine/threonine-protein kinase Nek10.